The following is a 326-amino-acid chain: Large ribosomal subunit protein uL4 (326 aa).

The tract at residues 1-211 is large ribosomal subunit protein uL4; the sequence is MASCVVKNWQ…EKLKARWGSG (211 aa). 2 disordered regions span residues 44 to 76 and 211 to 326; these read ARQG…ARAG and GAAA…EDND. Positions 60–71 are enriched in basic residues; it reads GGRKPWRQKGTG. Residues 212-326 are unknown; that stretch reads AAAAAPTQAD…TAAAEEEDND (115 aa). Over residues 221-238 the composition is skewed to basic and acidic residues; the sequence is DRLEDQAQAAEREARPVE. 2 stretches are compositionally biased toward low complexity: residues 252 to 279 and 294 to 312; these read EAQA…QVQE and QGQA…PPAG. The segment covering 313-326 has biased composition (acidic residues); sequence EEAETAAAEEEDND.

The protein belongs to the universal ribosomal protein uL4 family. As to quaternary structure, part of the 50S ribosomal subunit.

In terms of biological role, one of the primary rRNA binding proteins, this protein initially binds near the 5'-end of the 23S rRNA. It is important during the early stages of 50S assembly. It makes multiple contacts with different domains of the 23S rRNA in the assembled 50S subunit and ribosome. Forms part of the polypeptide exit tunnel. The chain is Large ribosomal subunit protein uL4 from Synechococcus sp. (strain JA-3-3Ab) (Cyanobacteria bacterium Yellowstone A-Prime).